We begin with the raw amino-acid sequence, 205 residues long: Ribosomal RNA small subunit methyltransferase G (205 aa).

Residues Gly-66, Phe-71, 119-120 (IE), and Arg-135 each bind S-adenosyl-L-methionine.

Belongs to the methyltransferase superfamily. RNA methyltransferase RsmG family.

The protein localises to the cytoplasm. It catalyses the reaction guanosine(527) in 16S rRNA + S-adenosyl-L-methionine = N(7)-methylguanosine(527) in 16S rRNA + S-adenosyl-L-homocysteine. Its function is as follows. Specifically methylates the N7 position of guanine in position 527 of 16S rRNA. The protein is Ribosomal RNA small subunit methyltransferase G of Rhizobium etli (strain ATCC 51251 / DSM 11541 / JCM 21823 / NBRC 15573 / CFN 42).